A 217-amino-acid polypeptide reads, in one-letter code: Ribosome maturation factor RimM (217 aa).

Positions 115 to 186 (EDAWYDNQLV…TVTLTPPPGL (72 aa)) constitute a PRC barrel domain. Residues 181 to 217 (TPPPGLFEDLPDDAPAAGDESEPVSPPVTAEETPGGE) form a disordered region.

The protein belongs to the RimM family. As to quaternary structure, binds ribosomal protein uS19.

It localises to the cytoplasm. In terms of biological role, an accessory protein needed during the final step in the assembly of 30S ribosomal subunit, possibly for assembly of the head region. Essential for efficient processing of 16S rRNA. May be needed both before and after RbfA during the maturation of 16S rRNA. It has affinity for free ribosomal 30S subunits but not for 70S ribosomes. This chain is Ribosome maturation factor RimM, found in Leifsonia xyli subsp. xyli (strain CTCB07).